We begin with the raw amino-acid sequence, 1021 residues long: Nonribosomal peptide synthetase asaC (1021 aa).

An adenylation (A) domain region spans residues 17 to 418 (RHHVRTSPNA…ARADNMVKIR (402 aa)). In terms of domain architecture, Carrier spans 528–603 (KDAGDSVTWL…GLASVIDAGH (76 aa)). O-(pantetheine 4'-phosphoryl)serine is present on serine 563. Positions 646–888 (LTGATGFLGT…MIPVDFITTA (243 aa)) are short-chain dehydrogenase/reductase (R) domain.

It belongs to the NRP synthetase family.

It participates in secondary metabolite biosynthesis. In terms of biological role, nonribosomal peptide synthetase; part of the gene cluster that mediates the biosynthesis of aspergillic acid, a hydroxamic acid-containing pyrazinone with aliphatic side chains that originates from leucine (Leu) and isoleucine (Ile). Aspergillic acid has antibiotic properties and was shown to be lethal to mice. The first step in the pathway is the production of deoxyaspergillic acid via a condensation between the Ile amine and the Leu carboxylic acid, followed by a reductive release from the protein forming the dipeptide aldehyde NH(2)-Leu-Ile-CHO, which could undergo an intermolecular cyclization resulting in a dihydropyrazinone. As the NRPS asaC lacks a condensation domain, it is improbable that it is responsible for condensation of Leu and Ile. One possibility is that asaC acts on a previously condensed dipeptide and functions as a Leu-Ile reductase to yield deoxyaspergillic acid. After asaC forms deoxyaspergillic acid, the cytochrome P450 asaD oxidizes the pyrazinone to the hydroxamic acid-containing bioactive metabolite aspergillic acid. The hydroxylase/desaturase asaB can then convert aspergillic acid to hydroxyaspergillic acid. Both aspergillic acid and hydroxyaspergillic acid can form complexes with iron producing ferriaspergillin analogs. This is Nonribosomal peptide synthetase asaC from Aspergillus flavus (strain ATCC 200026 / FGSC A1120 / IAM 13836 / NRRL 3357 / JCM 12722 / SRRC 167).